Consider the following 540-residue polypeptide: Peptide chain release factor 3 (540 aa).

The 270-residue stretch at Glu-14–Gly-283 folds into the tr-type G domain. GTP-binding positions include Ser-23 to Thr-30, Asp-91 to His-95, and Asn-145 to Asp-148.

This sequence belongs to the TRAFAC class translation factor GTPase superfamily. Classic translation factor GTPase family. PrfC subfamily.

It is found in the cytoplasm. Increases the formation of ribosomal termination complexes and stimulates activities of RF-1 and RF-2. It binds guanine nucleotides and has strong preference for UGA stop codons. It may interact directly with the ribosome. The stimulation of RF-1 and RF-2 is significantly reduced by GTP and GDP, but not by GMP. The protein is Peptide chain release factor 3 of Trichormus variabilis (strain ATCC 29413 / PCC 7937) (Anabaena variabilis).